Consider the following 279-residue polypeptide: GATA transcription factor 15 (279 aa).

The disordered stretch occupies residues A52–A94. Low complexity predominate over residues T58 to V74. The GATA-type zinc finger occupies C154–C179.

It belongs to the type IV zinc-finger family. Class B subfamily. Highly expressed in inflorescences. Expressed in vascular bundles of root stele within the elongation zones, of elongating upper internodes and of the junctions of leaf blades and sheaths.

Functionally, probable transcription factor that regulates organogenesis during transition from the vegetative to the reproductive phase. Regulates the expression of CYP78A11/PLA1, HD3A and MADS1 during reproductive development in rice. May act upstream of CYP78A11/PLA1 during panicle development. Acts independently of the photoperiodic and gibberellin signaling pathways. The polypeptide is GATA transcription factor 15 (Oryza sativa subsp. japonica (Rice)).